We begin with the raw amino-acid sequence, 363 residues long: Zinc phosphodiesterase ELAC protein 1 (363 aa).

The Zn(2+) site is built by histidine 62, histidine 64, aspartate 66, histidine 67, histidine 182, aspartate 253, and histidine 313. The active-site Proton acceptor is aspartate 66.

This sequence belongs to the RNase Z family. As to quaternary structure, homodimer. The cofactor is Zn(2+).

It localises to the cytoplasm. The protein localises to the cytosol. Its subcellular location is the nucleus. It catalyses the reaction Endonucleolytic cleavage of RNA, removing extra 3' nucleotides from tRNA precursor, generating 3' termini of tRNAs. A 3'-hydroxy group is left at the tRNA terminus and a 5'-phosphoryl group is left at the trailer molecule.. Zinc phosphodiesterase, which displays some tRNA 3'-processing endonuclease activity. Specifically involved in tRNA repair: acts downstream of the ribosome-associated quality control (RQC) pathway by removing a 2',3'-cyclic phosphate from tRNAs following cleavage by ANKZF1. tRNAs are then processed by TRNT1. In Bos taurus (Bovine), this protein is Zinc phosphodiesterase ELAC protein 1 (ELAC1).